Reading from the N-terminus, the 121-residue chain is Large ribosomal subunit protein bL12 (121 aa).

The protein belongs to the bacterial ribosomal protein bL12 family. Homodimer. Part of the ribosomal stalk of the 50S ribosomal subunit. Forms a multimeric L10(L12)X complex, where L10 forms an elongated spine to which 2 to 4 L12 dimers bind in a sequential fashion. Binds GTP-bound translation factors.

Forms part of the ribosomal stalk which helps the ribosome interact with GTP-bound translation factors. Is thus essential for accurate translation. The sequence is that of Large ribosomal subunit protein bL12 from Pectobacterium atrosepticum (strain SCRI 1043 / ATCC BAA-672) (Erwinia carotovora subsp. atroseptica).